A 685-amino-acid polypeptide reads, in one-letter code: Polyphosphate kinase (685 aa).

Asn-45 serves as a coordination point for ATP. Mg(2+)-binding residues include Arg-375 and Arg-405. Catalysis depends on His-435, which acts as the Phosphohistidine intermediate. ATP is bound by residues Tyr-468, Arg-564, and His-592.

This sequence belongs to the polyphosphate kinase 1 (PPK1) family. The cofactor is Mg(2+). Post-translationally, an intermediate of this reaction is the autophosphorylated ppk in which a phosphate is covalently linked to a histidine residue through a N-P bond.

It catalyses the reaction [phosphate](n) + ATP = [phosphate](n+1) + ADP. Its function is as follows. Catalyzes the reversible transfer of the terminal phosphate of ATP to form a long-chain polyphosphate (polyP). The protein is Polyphosphate kinase of Neisseria meningitidis serogroup A / serotype 4A (strain DSM 15465 / Z2491).